Here is a 317-residue protein sequence, read N- to C-terminus: Melanocyte-stimulating hormone receptor (317 aa).

Residues 1-37 (MPVQGSQRRLLGSLNSTPTATPKLGLAANQTGAWCLE) lie on the Extracellular side of the membrane. Asn29 carries an N-linked (GlcNAc...) asparagine glycan. The helical transmembrane segment at 38–63 (VSIPDGLFLSLGLVSLVENVLVVAAI) threads the bilayer. Over 64 to 72 (AKNRNLHSP) the chain is Cytoplasmic. A helical transmembrane segment spans residues 73 to 93 (MYCFICCLALSDLLVSGSNML). The Extracellular portion of the chain corresponds to 94 to 118 (ETAVILLLEAGALAARAAVVQQLDN). Residues 119 to 140 (VIDVITCSSMLSSLCFLGAIAV) traverse the membrane as a helical segment. At 141–163 (DRYISIFYALRYHSIVTLPRAQR) the chain is on the cytoplasmic side. Residues 164-183 (VVAAIWVASVLFSTLFIAYY) traverse the membrane as a helical segment. Residues 184 to 191 (DHAAVLLC) are Extracellular-facing. Residues 192-211 (LVVFFLAMLVLMAVLYVHML) form a helical membrane-spanning segment. Residues 212–240 (ARACQHAQGIAQLHKRQRPAHQGFGLKGA) lie on the Cytoplasmic side of the membrane. Residues 241–266 (ATLTILLGIFFLCWGPFFLHLTLIVL) form a helical membrane-spanning segment. Topologically, residues 267–279 (CPQHPTCSCIFKN) are extracellular. Residues 280-300 (FNLFLALIICNAIIDPLIYAF) form a helical membrane-spanning segment. The Cytoplasmic segment spans residues 301 to 317 (RSQELRRTLKEVLLCSW). Cys315 carries the S-palmitoyl cysteine lipid modification.

This sequence belongs to the G-protein coupled receptor 1 family. As to quaternary structure, interacts with MGRN1, but does not undergo MGRN1-mediated ubiquitination; this interaction competes with GNAS-binding and thus inhibits agonist-induced cAMP production. Interacts with OPN3; the interaction results in a decrease in MC1R-mediated cAMP signaling and ultimately a decrease in melanin production in melanocytes.

The protein localises to the cell membrane. Its function is as follows. Receptor for MSH (alpha, beta and gamma) and ACTH. The activity of this receptor is mediated by G proteins which activate adenylate cyclase. Mediates melanogenesis, the production of eumelanin (black/brown) and phaeomelanin (red/yellow), via regulation of cAMP signaling in melanocytes. This chain is Melanocyte-stimulating hormone receptor (MC1R), found in Colobus guereza (Mantled guereza).